A 140-amino-acid polypeptide reads, in one-letter code: 3-hydroxyacyl-[acyl-carrier-protein] dehydratase FabZ (140 aa).

Residue His48 is part of the active site.

Belongs to the thioester dehydratase family. FabZ subfamily.

The protein resides in the cytoplasm. The enzyme catalyses a (3R)-hydroxyacyl-[ACP] = a (2E)-enoyl-[ACP] + H2O. Involved in unsaturated fatty acids biosynthesis. Catalyzes the dehydration of short chain beta-hydroxyacyl-ACPs and long chain saturated and unsaturated beta-hydroxyacyl-ACPs. The sequence is that of 3-hydroxyacyl-[acyl-carrier-protein] dehydratase FabZ from Pelotomaculum thermopropionicum (strain DSM 13744 / JCM 10971 / SI).